The chain runs to 609 residues: Laccase-1 (609 aa).

An N-terminal signal peptide occupies residues 1–20; that stretch reads MYLSTVLFPLLALNLGLSHA. Positions 45-141 constitute a Plastocyanin-like 1 domain; the sequence is VFTNGEYPGP…DGQVGAMYIR (97 aa). Asn75 carries N-linked (GlcNAc...) asparagine glycosylation. Cu cation contacts are provided by His79, His81, His123, and His125. Asn257 is a glycosylation site (N-linked (GlcNAc...) asparagine). The Plastocyanin-like 2 domain maps to 270–372; the sequence is TPSSVEPPVI…MSVYAILSYV (103 aa). Asn403, Asn443, and Asn486 each carry an N-linked (GlcNAc...) asparagine glycan. Residues 463 to 602 enclose the Plastocyanin-like 3 domain; that stretch reads STPLLFEPDP…MGGMALALLD (140 aa). Cu cation-binding residues include His508, His511, and His513. 2 N-linked (GlcNAc...) asparagine glycosylation sites follow: Asn531 and Asn546. Residues His585, Cys586, His587, and His591 each coordinate Cu cation.

This sequence belongs to the multicopper oxidase family. The cofactor is Cu cation.

Its subcellular location is the secreted. It catalyses the reaction 4 hydroquinone + O2 = 4 benzosemiquinone + 2 H2O. In terms of biological role, required for the conversion of the yellow polyketide pigment synthesized by wA to the conidial green pigment. This Emericella nidulans (strain FGSC A4 / ATCC 38163 / CBS 112.46 / NRRL 194 / M139) (Aspergillus nidulans) protein is Laccase-1 (yA).